Reading from the N-terminus, the 1233-residue chain is Structural maintenance of chromosomes protein 1A (1233 aa).

32–39 (GPNGSGKS) is an ATP binding site. Coiled-coil stretches lie at residues 104-124 (EYKI…LEKL) and 163-503 (ELAQ…KAEI). A compositionally biased stretch (basic and acidic residues) spans 284 to 293 (IKEKDSELNQ). 2 disordered regions span residues 284 to 308 (IKEK…TSHK) and 348 to 369 (QEFE…TLEE). Phosphoserine is present on residues S358 and S360. The 115-residue stretch at 515–629 (VYGRLIDLCQ…DNVEDARRIA (115 aa)) folds into the SMC hinge domain. K648 and K713 each carry N6-acetyllysine. Residues 660 to 935 (KAKARRWDEK…RHNLLQACKM (276 aa)) are a coiled coil. The tract at residues 947 to 966 (MDDISQEEGSSQGEDSVSGS) is disordered. Residues 953 to 966 (EEGSSQGEDSVSGS) are compositionally biased toward low complexity. S957 is modified (phosphoserine; by ATM). At S962 the chain carries Phosphoserine. S966 is subject to Phosphoserine; by ATM and ATR. S970 bears the Phosphoserine mark. The stretch at 991 to 1068 (KDAQAEEEIK…FEQIKKERFD (78 aa)) forms a coiled coil. Position 1037 is an N6-acetyllysine (K1037).

The protein belongs to the SMC family. SMC1 subfamily. In terms of assembly, forms a heterodimer with SMC3 in cohesin complexes. Cohesin complexes are composed of the SMC1 (SMC1A or SMC1B) and SMC3 heterodimer attached via their SMC hinge domain, RAD21 which link them, and one STAG protein (STAG1, STAG2 or STAG3), which interacts with RAD21. In germ cell cohesin complexes, SMC1A is mutually exclusive with SMC1B. Interacts with BRCA1. Found in a complex with CDCA5, SMC3 and RAD21, PDS5A/SCC-112 and PDS5B/APRIN. Interacts with NDC80. Interacts with BRAT1. Found in a complex containing POLE and SMC3. Interacts with RPGR, STAG3 and SYCP2. The cohesin complex interacts with the cohesin loading complex subunits NIPBL/Scc2 (via HEAT repeats) and MAU2/Scc4. NIPBL directly contacts all members of the complex, RAD21, SMC1A/B, SMC3 and STAG1. Post-translationally, ubiquitinated by the DCX(DCAF15) complex, leading to its degradation. In terms of processing, phosphorylated by ATM upon ionizing radiation in a NBS1-dependent manner. Phosphorylated by ATR upon DNA methylation in a MSH2/MSH6-dependent manner. Phosphorylation of Ser-957 and Ser-966 activates it and is required for S-phase checkpoint activation.

It localises to the nucleus. The protein resides in the chromosome. Its subcellular location is the centromere. The protein localises to the kinetochore. Involved in chromosome cohesion during cell cycle and in DNA repair. Central component of cohesin complex. The cohesin complex is required for the cohesion of sister chromatids after DNA replication. The cohesin complex apparently forms a large proteinaceous ring within which sister chromatids can be trapped. At anaphase, the complex is cleaved and dissociates from chromatin, allowing sister chromatids to segregate. The cohesin complex may also play a role in spindle pole assembly during mitosis. Involved in DNA repair via its interaction with BRCA1 and its related phosphorylation by ATM, or via its phosphorylation by ATR. Works as a downstream effector both in the ATM/NBS1 branch and in the ATR/MSH2 branch of S-phase checkpoint. The polypeptide is Structural maintenance of chromosomes protein 1A (SMC1A) (Homo sapiens (Human)).